A 715-amino-acid polypeptide reads, in one-letter code: Macrolide export ATP-binding/permease protein MacB (715 aa).

In terms of domain architecture, ABC transporter spans 4–245 (IELQDIRKTY…VSKAAPAQSK (242 aa)). 40–47 (GTSGSGKT) contacts ATP. The interval 229–251 (AVGDMPQVSKAAPAQSKPVHSAM) is disordered. The next 4 membrane-spanning stretches (helical) occupy residues 277–297 (AALT…MMEI), 592–612 (LLLA…MNIM), 639–659 (QFLF…ILVG), and 681–701 (ILAA…YPAW).

This sequence belongs to the ABC transporter superfamily. Macrolide exporter (TC 3.A.1.122) family. As to quaternary structure, homodimer.

It localises to the cell inner membrane. Non-canonical ABC transporter that contains transmembrane domains (TMD), which form a pore in the inner membrane, and an ATP-binding domain (NBD), which is responsible for energy generation. Confers resistance against macrolides. The polypeptide is Macrolide export ATP-binding/permease protein MacB (Syntrophobacter fumaroxidans (strain DSM 10017 / MPOB)).